Consider the following 266-residue polypeptide: Vitamin B12-binding protein (266 aa).

Positions 1-22 are cleaved as a signal peptide; the sequence is MAKSLFRALVALSFLAPLWLNA. Residues 25–266 enclose the Fe/B12 periplasmic-binding domain; it reads RVITLSPANT…QLCNALSQVD (242 aa). Cyanocob(III)alamin contacts are provided by residues tyrosine 50 and 242 to 246; that span reads DWFER. Cysteines 183 and 259 form a disulfide.

It belongs to the BtuF family. In terms of assembly, the complex is composed of two ATP-binding proteins (BtuD), two transmembrane proteins (BtuC) and a solute-binding protein (BtuF).

It is found in the periplasm. Functionally, part of the ABC transporter complex BtuCDF involved in vitamin B12 import. Binds vitamin B12 and delivers it to the periplasmic surface of BtuC. This chain is Vitamin B12-binding protein, found in Shigella flexneri.